Here is a 353-residue protein sequence, read N- to C-terminus: Phosphate acyltransferase (353 aa).

The protein belongs to the PlsX family. Homodimer. Probably interacts with PlsY.

Its subcellular location is the cytoplasm. It carries out the reaction a fatty acyl-[ACP] + phosphate = an acyl phosphate + holo-[ACP]. It participates in lipid metabolism; phospholipid metabolism. Functionally, catalyzes the reversible formation of acyl-phosphate (acyl-PO(4)) from acyl-[acyl-carrier-protein] (acyl-ACP). This enzyme utilizes acyl-ACP as fatty acyl donor, but not acyl-CoA. The protein is Phosphate acyltransferase of Syntrophobacter fumaroxidans (strain DSM 10017 / MPOB).